Reading from the N-terminus, the 425-residue chain is Alpha-N-acetylgalactosaminidase (425 aa).

NAD(+)-binding positions include 29–30 (NR), glutamate 51, 99–102 (WLTH), 119–120 (EV), and asparagine 148. Tyrosine 177 contacts substrate. Residues 194–198 (FHNHW) and tyrosine 211 contribute to the NAD(+) site. Residues 211–214 (YPTH) and tyrosine 293 contribute to the substrate site.

It belongs to the Gfo/Idh/MocA family. Glycosyl hydrolase 109 subfamily. It depends on NAD(+) as a cofactor.

The enzyme catalyses Cleavage of non-reducing alpha-(1-&gt;3)-N-acetylgalactosamine residues from human blood group A and AB mucin glycoproteins, Forssman hapten and blood group A lacto series glycolipids.. Functionally, glycosidase that has specific alpha-N-acetylgalactosaminidase activity. This chain is Alpha-N-acetylgalactosaminidase, found in Bacteroides fragilis (strain ATCC 25285 / DSM 2151 / CCUG 4856 / JCM 11019 / LMG 10263 / NCTC 9343 / Onslow / VPI 2553 / EN-2).